We begin with the raw amino-acid sequence, 176 residues long: ATP synthase subunit b (176 aa).

A helical membrane pass occupies residues 7–27 (IQIPDGSAIFVLLTFILLMFI). Residues 75–94 (SQSQATALMENARKSSEEQS) form a disordered region. Residues 85–94 (NARKSSEEQS) show a composition bias toward basic and acidic residues.

This sequence belongs to the ATPase B chain family. F-type ATPases have 2 components, F(1) - the catalytic core - and F(0) - the membrane proton channel. F(1) has five subunits: alpha(3), beta(3), gamma(1), delta(1), epsilon(1). F(0) has three main subunits: a(1), b(2) and c(10-14). The alpha and beta chains form an alternating ring which encloses part of the gamma chain. F(1) is attached to F(0) by a central stalk formed by the gamma and epsilon chains, while a peripheral stalk is formed by the delta and b chains.

The protein localises to the cell membrane. Its function is as follows. F(1)F(0) ATP synthase produces ATP from ADP in the presence of a proton or sodium gradient. F-type ATPases consist of two structural domains, F(1) containing the extramembraneous catalytic core and F(0) containing the membrane proton channel, linked together by a central stalk and a peripheral stalk. During catalysis, ATP synthesis in the catalytic domain of F(1) is coupled via a rotary mechanism of the central stalk subunits to proton translocation. Functionally, component of the F(0) channel, it forms part of the peripheral stalk, linking F(1) to F(0). The polypeptide is ATP synthase subunit b (Oenococcus oeni (strain ATCC BAA-331 / PSU-1)).